An 85-amino-acid polypeptide reads, in one-letter code: Sec-independent protein translocase protein TatA (85 aa).

The helical transmembrane segment at 1–21 threads the bilayer; the sequence is MGSFSIWHWLIVLVIIMMVFG. Residues 39–51 are compositionally biased toward basic and acidic residues; sequence FKDGMREGQEDKP. Residues 39–85 are disordered; sequence FKDGMREGQEDKPAGSQQPQQTAGQPPRELHDATTIDVEARDKSKQG. Residues 53-62 are compositionally biased toward polar residues; it reads GSQQPQQTAG. Basic and acidic residues predominate over residues 66 to 85; it reads RELHDATTIDVEARDKSKQG.

It belongs to the TatA/E family. In terms of assembly, the Tat system comprises two distinct complexes: a TatABC complex, containing multiple copies of TatA, TatB and TatC subunits, and a separate TatA complex, containing only TatA subunits. Substrates initially bind to the TatABC complex, which probably triggers association of the separate TatA complex to form the active translocon.

It is found in the cell inner membrane. Part of the twin-arginine translocation (Tat) system that transports large folded proteins containing a characteristic twin-arginine motif in their signal peptide across membranes. TatA could form the protein-conducting channel of the Tat system. The polypeptide is Sec-independent protein translocase protein TatA (Ralstonia pickettii (strain 12J)).